A 365-amino-acid polypeptide reads, in one-letter code: DNA repair protein rhp51 (365 aa).

Residues 1-25 (MADTEVEMQVSAADTNNNENGQAQS) form a disordered region. Positions 12–25 (AADTNNNENGQAQS) are enriched in polar residues. 149 to 156 (GEFRTGKS) lines the ATP pocket.

This sequence belongs to the RecA family. RAD51 subfamily. As to quaternary structure, interacts with rad22, rad54, rdh54, rhp54, rti1, swi2 and swi5. Forms homooiligomers.

The protein localises to the nucleus. In terms of biological role, required both for recombination and for the repair of DNA damage caused by X-rays. Binds to single and double-stranded DNA, in the presence of magnesium, and exhibits DNA-dependent ATPase activity. Promotes DNA strand annealing and strand exchange via DNA recombinase activity and forms helical nucleoprotein filaments. The chain is DNA repair protein rhp51 (rhp51) from Schizosaccharomyces pombe (strain 972 / ATCC 24843) (Fission yeast).